Consider the following 501-residue polypeptide: Solute carrier family 2, facilitated glucose transporter member 5 (501 aa).

Position 1 is an N-acetylmethionine (methionine 1). At 1–18 the chain is on the cytoplasmic side; it reads MEPQDPVKREGRLTPVIV. A helical membrane pass occupies residues 19-39; it reads LATLIAAFGSSFQYGYNVATI. Tyrosine 32 provides a ligand contact to D-fructose. At 40–68 the chain is on the extracellular side; it reads NSPSEFMKDFYNYTYYDRVGEYMNEFYLT. Asparagine 51 is a glycosylation site (N-linked (GlcNAc...) asparagine). Residues 69-91 traverse the membrane as a helical segment; sequence LLWSVTVSMFPFGGFLGSLMVGP. The Cytoplasmic portion of the chain corresponds to 92-98; sequence LVNNLGR. A helical membrane pass occupies residues 99–119; sequence KGTLLFNNIFSIVPALLMGFS. The Extracellular segment spans residues 120-126; that stretch reads DLAKSFE. The helical transmembrane segment at 127-149 threads the bilayer; the sequence is MIIVARVLVGICAGLSSNVVPMY. Residues 150–161 lie on the Cytoplasmic side of the membrane; that stretch reads LGELAPKNWRGA. A helical transmembrane segment spans residues 162-182; that stretch reads LGVVPQLFITIGILVAQIFGL. Glutamine 167 is a D-fructose binding site. Over 183–192 the chain is Extracellular; that stretch reads RSLLANEEGW. A helical membrane pass occupies residues 193-213; the sequence is PILLGLTGIPAVLQLLFLPFF. At 214–277 the chain is on the cytoplasmic side; sequence PESPRYLLIQ…LFKMRSLRWQ (64 aa). Residues 278-298 form a helical membrane-spanning segment; it reads VISIIVLMAGQQLSGVNAIYY. D-fructose contacts are provided by residues glutamine 288 and 296 to 298; that span reads IYY. The Extracellular portion of the chain corresponds to 299–313; the sequence is YADQIYLSAGVKEDD. The helical transmembrane segment at 314 to 334 threads the bilayer; the sequence is VQYVTAGTGAVNVLITVCAIF. The Cytoplasmic segment spans residues 335–342; sequence VVELMGRR. Residues 343-363 form a helical membrane-spanning segment; that stretch reads FLLLLGFSVCFTACCVLTGAL. The Extracellular segment spans residues 364–371; it reads AMQDVISW. A helical transmembrane segment spans residues 372–394; sequence MPYVSIACVISYVIGHALGPSPI. Histidine 387 contributes to the D-fructose binding site. At 395–412 the chain is on the cytoplasmic side; the sequence is PALLVTEIFLQSSRPAAY. Residues 413–433 traverse the membrane as a helical segment; that stretch reads MVAGTVHWLSNFTVGLVFPFI. D-fructose is bound at residue 419-420; the sequence is HW. Topologically, residues 434–439 are extracellular; that stretch reads QVGLGA. Residues 440 to 460 form a helical membrane-spanning segment; sequence YSFVIFAVICFLTTVYIFLII. Over 461 to 501 the chain is Cytoplasmic; sequence PETKSKTFIEINQIFIKMNKVPGVHPEKEELKEFPPSTARQ.

Belongs to the major facilitator superfamily. Sugar transporter (TC 2.A.1.1) family. Glucose transporter subfamily.

The protein localises to the apical cell membrane. Its subcellular location is the cell membrane. The protein resides in the sarcolemma. The enzyme catalyses D-fructose(out) = D-fructose(in). Its function is as follows. Functions as a fructose transporter that has only low activity with other monosaccharides. Can mediate the uptake of deoxyglucose, but with low efficiency. Essential for fructose uptake in the small intestine. Plays a role in the regulation of salt uptake and blood pressure in response to dietary fructose. Required for the development of high blood pressure in response to high dietary fructose intake. In Ovis aries (Sheep), this protein is Solute carrier family 2, facilitated glucose transporter member 5.